The primary structure comprises 401 residues: Large ribosomal subunit protein uL4B (401 aa).

Residues 351–373 (IKAKEKKPDDGKPKAKKPLDAKT) show a composition bias toward basic and acidic residues. Positions 351 to 401 (IKAKEKKPDDGKPKAKKPLDAKTKMIKLAKAKKRQARAEAKTAEAKTAESK) are disordered. Residues 374-385 (KMIKLAKAKKRQ) show a composition bias toward basic residues. Basic and acidic residues predominate over residues 386 to 401 (ARAEAKTAEAKTAESK).

It belongs to the universal ribosomal protein uL4 family. In terms of assembly, component of the large ribosomal subunit.

The protein resides in the cytoplasm. Functionally, component of the large ribosomal subunit. The ribosome is a large ribonucleoprotein complex responsible for the synthesis of proteins in the cell. The polypeptide is Large ribosomal subunit protein uL4B (rpl4-b) (Xenopus laevis (African clawed frog)).